Reading from the N-terminus, the 305-residue chain is Endonuclease III-like protein 1 (305 aa).

Residues 1–28 (MNAAGVRMVVTRARSRGTGASLRRRGEK) constitute a mitochondrion transit peptide. The tract at residues 1-83 (MNAAGVRMVV…HLQAPSWQPQ (83 aa)) is disordered. A Phosphoserine modification is found at S64. The HhH domain occupies 192 to 216 (RYDGDIPASVAELVALPGVGPKMAH). Residue K213 is the Nucleophile; for N-glycosylase activity of the active site. The [4Fe-4S] cluster site is built by C283, C290, C293, and C299.

The protein belongs to the Nth/MutY family. In terms of assembly, interacts with YBX1. Interacts with ERCC5/XPG; the interaction stimulates NTHL1 activity and NTHL1 binding to its DNA substrate. It depends on [4Fe-4S] cluster as a cofactor.

Its subcellular location is the nucleus. It localises to the mitochondrion. It catalyses the reaction 2'-deoxyribonucleotide-(2'-deoxyribose 5'-phosphate)-2'-deoxyribonucleotide-DNA = a 3'-end 2'-deoxyribonucleotide-(2,3-dehydro-2,3-deoxyribose 5'-phosphate)-DNA + a 5'-end 5'-phospho-2'-deoxyribonucleoside-DNA + H(+). Bifunctional DNA N-glycosylase with associated apurinic/apyrimidinic (AP) lyase function that catalyzes the first step in base excision repair (BER), the primary repair pathway for the repair of oxidative DNA damage. The DNA N-glycosylase activity releases the damaged DNA base from DNA by cleaving the N-glycosidic bond, leaving an AP site. The AP lyase activity cleaves the phosphodiester bond 3' to the AP site by a beta-elimination. Primarily recognizes and repairs oxidative base damage of pyrimidines. This chain is Endonuclease III-like protein 1, found in Bos taurus (Bovine).